The primary structure comprises 121 residues: Holo-[acyl-carrier-protein] synthase (121 aa).

The Mg(2+) site is built by D8 and E58.

The protein belongs to the P-Pant transferase superfamily. AcpS family. The cofactor is Mg(2+).

The protein resides in the cytoplasm. The enzyme catalyses apo-[ACP] + CoA = holo-[ACP] + adenosine 3',5'-bisphosphate + H(+). Functionally, transfers the 4'-phosphopantetheine moiety from coenzyme A to a Ser of acyl-carrier-protein. The polypeptide is Holo-[acyl-carrier-protein] synthase (Bacillus velezensis (strain DSM 23117 / BGSC 10A6 / LMG 26770 / FZB42) (Bacillus amyloliquefaciens subsp. plantarum)).